Consider the following 80-residue polypeptide: Exodeoxyribonuclease 7 small subunit (80 aa).

It belongs to the XseB family. Heterooligomer composed of large and small subunits.

It is found in the cytoplasm. The enzyme catalyses Exonucleolytic cleavage in either 5'- to 3'- or 3'- to 5'-direction to yield nucleoside 5'-phosphates.. Its function is as follows. Bidirectionally degrades single-stranded DNA into large acid-insoluble oligonucleotides, which are then degraded further into small acid-soluble oligonucleotides. This is Exodeoxyribonuclease 7 small subunit from Escherichia coli O6:K15:H31 (strain 536 / UPEC).